Here is a 670-residue protein sequence, read N- to C-terminus: tRNA 5-methylaminomethyl-2-thiouridine biosynthesis bifunctional protein MnmC (670 aa).

The interval methionine 1 to isoleucine 242 is tRNA (mnm(5)s(2)U34)-methyltransferase. The interval isoleucine 269–glutamate 670 is FAD-dependent cmnm(5)s(2)U34 oxidoreductase.

This sequence in the N-terminal section; belongs to the methyltransferase superfamily. tRNA (mnm(5)s(2)U34)-methyltransferase family. In the C-terminal section; belongs to the DAO family. Requires FAD as cofactor.

It localises to the cytoplasm. It carries out the reaction 5-aminomethyl-2-thiouridine(34) in tRNA + S-adenosyl-L-methionine = 5-methylaminomethyl-2-thiouridine(34) in tRNA + S-adenosyl-L-homocysteine + H(+). Catalyzes the last two steps in the biosynthesis of 5-methylaminomethyl-2-thiouridine (mnm(5)s(2)U) at the wobble position (U34) in tRNA. Catalyzes the FAD-dependent demodification of cmnm(5)s(2)U34 to nm(5)s(2)U34, followed by the transfer of a methyl group from S-adenosyl-L-methionine to nm(5)s(2)U34, to form mnm(5)s(2)U34. In Haemophilus influenzae (strain ATCC 51907 / DSM 11121 / KW20 / Rd), this protein is tRNA 5-methylaminomethyl-2-thiouridine biosynthesis bifunctional protein MnmC.